The following is a 374-amino-acid chain: MEPAPLILLAAGGTGGHLFPAEALGVVLMQRGLRVRLVTDSRALRYSGLFSREMTDVVPSETVRGRSPVALARTGAMLGAGTLKALTLMWRLKPAAVIGFGGYPTLPPLIAARLMKIPTLVHDSNAVMGRANRFLSAHVTAIATSLPGVLDRDPALAAKTTTTGTPMRPAILAAAAVPYAAPEPDGPLRLLVTGGSQGARIMADVVPHAIEQLSPELWRRLVLVQQVRDEDMARVRAVYDRLKLNFELEPFFSDLPARLASSHLVVSRSGAGTVAELAAIGRPSILVPLPGALDQDQFANAGVLAKADAAIRIAQHDFTPARLAQEITALAADPERLTAMAAGARGVGRLDAAERLADLVVEVAGIPAKTMMYQ.

Residues 14-16 (TGG), N125, R168, S196, and Q297 contribute to the UDP-N-acetyl-alpha-D-glucosamine site.

Belongs to the glycosyltransferase 28 family. MurG subfamily.

The protein localises to the cell inner membrane. It catalyses the reaction di-trans,octa-cis-undecaprenyl diphospho-N-acetyl-alpha-D-muramoyl-L-alanyl-D-glutamyl-meso-2,6-diaminopimeloyl-D-alanyl-D-alanine + UDP-N-acetyl-alpha-D-glucosamine = di-trans,octa-cis-undecaprenyl diphospho-[N-acetyl-alpha-D-glucosaminyl-(1-&gt;4)]-N-acetyl-alpha-D-muramoyl-L-alanyl-D-glutamyl-meso-2,6-diaminopimeloyl-D-alanyl-D-alanine + UDP + H(+). The protein operates within cell wall biogenesis; peptidoglycan biosynthesis. Its function is as follows. Cell wall formation. Catalyzes the transfer of a GlcNAc subunit on undecaprenyl-pyrophosphoryl-MurNAc-pentapeptide (lipid intermediate I) to form undecaprenyl-pyrophosphoryl-MurNAc-(pentapeptide)GlcNAc (lipid intermediate II). This chain is UDP-N-acetylglucosamine--N-acetylmuramyl-(pentapeptide) pyrophosphoryl-undecaprenol N-acetylglucosamine transferase, found in Rhodopseudomonas palustris (strain BisA53).